We begin with the raw amino-acid sequence, 126 residues long: MPEPAKSAPAPKKGSKKAVTKTQKKGDKKRKRARKESYSIYVYKVLKQVHPDTGISSKAMSIMNSFVNDIFERIAGEASRLAHYNKRSTITSREIQTAVRLLLPGELAKHAVSEGTKAVTKYTSSK.

Residues Met-1–Lys-12 are compositionally biased toward low complexity. Residues Met-1–Lys-35 form a disordered region. N6-acetyllysine occurs at positions 6 and 13. Positions Lys-13 to Arg-34 are enriched in basic residues. Ser-15 carries the phosphoserine modification. Residues Lys-16 and Lys-21 each carry the N6-acetyllysine modification. Residue Ser-113 is glycosylated (O-linked (GlcNAc) serine). A Glycyl lysine isopeptide (Lys-Gly) (interchain with G-Cter in ubiquitin) cross-link involves residue Lys-121.

This sequence belongs to the histone H2B family. As to quaternary structure, the nucleosome is a histone octamer containing two molecules each of H2A, H2B, H3 and H4 assembled in one H3-H4 heterotetramer and two H2A-H2B heterodimers. The octamer wraps approximately 147 bp of DNA. Monoubiquitination of Lys-121 by the BRE1 gives a specific tag for epigenetic transcriptional activation and is also prerequisite for histone H3 'Lys-4' and 'Lys-79' methylation. Post-translationally, phosphorylated on Ser-15 during apoptosis; which facilitates apoptotic chromatin condensation. In terms of processing, glcNAcylation at Ser-113 promotes monoubiquitination of Lys-121. It fluctuates in response to extracellular glucose, and associates with transcribed genes.

Its subcellular location is the nucleus. The protein resides in the chromosome. In terms of biological role, core component of nucleosome. Nucleosomes wrap and compact DNA into chromatin, limiting DNA accessibility to the cellular machineries which require DNA as a template. Histones thereby play a central role in transcription regulation, DNA repair, DNA replication and chromosomal stability. DNA accessibility is regulated via a complex set of post-translational modifications of histones, also called histone code, and nucleosome remodeling. This is Histone H2B 7 (H2B-VII) from Gallus gallus (Chicken).